The primary structure comprises 532 residues: Omega-hydroxyceramide transacylase (532 aa).

Positions 16–185 (ISFSGSGFLS…TGMQPCAFWT (170 aa)) constitute a PNPLA domain. Residues 51–55 (GTSAG) carry the GXSXG motif. Ser-53 acts as the Nucleophile in catalysis. Residue Asp-172 is the Proton acceptor of the active site. The DGA/G signature appears at 172–174 (DGG). Disordered regions lie at residues 290–457 (PERS…ELGQ) and 489–532 (VTES…SKVQ). Basic and acidic residues predominate over residues 310 to 322 (PHKEWVPKGDGRG). Composition is skewed to low complexity over residues 380 to 389 (PPSSTPGSSL) and 397 to 411 (SPLS…SGSP). The span at 517-532 (GFPRHSGSKKPSSKVQ) shows a compositional bias: basic residues.

As to expression, expressed in the digestive system. Expressed in the epidermis of skin keratinocytes. Strongly expressed in the granular layer. Expressed in the upper epidermis and eccrine sweat glands of the dermis and in the region of keratin filament bundles, which is more pronounced in upper epidermal layers and in the lower cornified layers.

The protein resides in the cytoplasm. It carries out the reaction an N-(omega-hydroxy-ultra-long chain fatty acyl)-sphingoid base + a (9Z,12Z)-octadecadienoyl-containing triacyl-sn-glycerol = an N-[omega-(9Z,12Z-octadecadienoyloxy)-O-ultra-long chain fatty acyl]-sphingoid base + a diacylglycerol. It catalyses the reaction an N-(omega-hydroxy-ultra-long chain fatty acyl)-sphing-4-enine + a (9Z,12Z)-octadecadienoyl-containing triacyl-sn-glycerol = an N-(omega-(9Z,12Z-octadecadienoyloxy)-ultra-long chain fatty acyl)-sphing-4-enine + a diacylglycerol. The enzyme catalyses N-(30-hydroxytriacontanoyl)-sphing-4-enine + 1,2,3-tri-(9Z,12Z)-octadecadienoylglycerol = N-[30-(9Z,12Z-octadecadienoyloxy)-triacontanoyl]-sphing-4-enine + di-(9Z,12Z)-octadecadienoylglycerol. The catalysed reaction is N-(28-hydroxyoctacosanoyl)-sphing-4-enine + a (9Z,12Z)-octadecadienoyl-containing triacyl-sn-glycerol = N-(28-(9Z,12Z-octadecadienoyloxy)-octacosanoyl)-sphing-4-enine + a diacylglycerol. It carries out the reaction N-(32-hydroxydotriacontanoyl)-sphing-4-enine + a (9Z,12Z)-octadecadienoyl-containing triacyl-sn-glycerol = N-(32-(9Z,12Z-octadecadienoyloxy)-dotricontanoyl)-sphing-4-enine + a diacylglycerol. It catalyses the reaction N-(32-hydroxydotriacontenoyl)-sphing-4-enine + a (9Z,12Z)-octadecadienoyl-containing triacyl-sn-glycerol = an N-(32-(9Z,12Z-octadecadienoyloxy)-dotriacontenoyl)-sphing-4-enine + a diacylglycerol. The enzyme catalyses an N-(34-hydroxytetratriacontenoyl)-sphing-4-enine + a (9Z,12Z)-octadecadienoyl-containing triacyl-sn-glycerol = an N-(34-(9Z,12Z-octadecadienoyloxy)-tetratriacontenoyl)-sphing-4-enine + a diacylglycerol. The catalysed reaction is an N-(34-hydroxytetratriacontadienoyl)-sphing-4-enine + a (9Z,12Z)-octadecadienoyl-containing triacyl-sn-glycerol = an N-(34-(9Z,12Z-octadecadienoyloxy)-tetratriacontadienoyl)-sphing-4-enine + a diacylglycerol. It carries out the reaction an N-(36-hydroxyhexatriacontenoyl)-sphing-4-enine + a (9Z,12Z)-octadecadienoyl-containing triacyl-sn-glycerol = an N-(36-(9Z,12Z-octadecadienoyloxy)-hexatriacontenoyl)-sphing-4-enine + a diacylglycerol. It catalyses the reaction an N-(36-hydroxyhexatriacontadienoyl)-sphing-4-enine + a (9Z,12Z)-octadecadienoyl-containing triacyl-sn-glycerol = an N-(36-(9Z,12Z-octadecadienoyloxy)-hexatriacontadienoyl)-sphing-4-enine + a diacylglycerol. The enzyme catalyses an N-(38-hydroxyoctatriacontenoyl)-sphing-4-enine + a (9Z,12Z)-octadecadienoyl-containing triacyl-sn-glycerol = an N-(38-(9Z,12Z-octadecadienoyloxy)-octatriacontenoyl)-sphing-4-enine + a diacylglycerol. In terms of biological role, omega-hydroxyceramide transacylase involved in the synthesis of omega-O-acylceramides (esterified omega-hydroxyacyl-sphingosine; EOS), which are extremely hydrophobic lipids involved in skin barrier formation. Catalyzes the last step of the synthesis of omega-O-acylceramides by transferring linoleic acid from triglycerides to an omega-hydroxyceramide. Omega-O-acylceramides, are required for the biogenesis of lipid lamellae in the stratum corneum and the formation of the cornified lipid envelope which are essential for the epidermis barrier function. These lipids also play a role in keratinocyte differentiation. May also act on omega-hydroxylated ultra-long chain fatty acids (omega-OH ULCFA) and acylglucosylceramides (GlcEOS). This chain is Omega-hydroxyceramide transacylase, found in Homo sapiens (Human).